Here is a 328-residue protein sequence, read N- to C-terminus: Bidirectional sugar transporter SWEET16 (328 aa).

Residues methionine 1 to serine 5 are Extracellular-facing. A helical transmembrane segment spans residues phenylalanine 6–threonine 26. One can recognise a MtN3/slv 1 domain in the interval phenylalanine 6–glutamate 92. The Cytoplasmic segment spans residues phenylalanine 27–glutamate 38. A helical membrane pass occupies residues phenylalanine 39–phenylalanine 56. Over tyrosine 57 to glycine 63 the chain is Extracellular. Residues glycine 64–leucine 84 traverse the membrane as a helical segment. Over tyrosine 85–lysine 99 the chain is Cytoplasmic. The chain crosses the membrane as a helical span at residues valine 100–leucine 120. Topologically, residues histidine 121–arginine 125 are extracellular. The chain crosses the membrane as a helical span at residues leucine 126–alanine 146. Residues phenylalanine 127–lysine 213 form the MtN3/slv 2 domain. The Cytoplasmic segment spans residues alanine 147 to proline 161. A helical transmembrane segment spans residues phenylalanine 162–valine 182. The Extracellular segment spans residues lysine 183–tyrosine 185. A helical transmembrane segment spans residues phenylalanine 186 to methionine 206. The Cytoplasmic portion of the chain corresponds to alanine 207 to histidine 328. Residues histidine 288–arginine 299 are compositionally biased toward basic residues. Residues histidine 288–histidine 328 form a disordered region. Over residues alanine 312–histidine 328 the composition is skewed to low complexity.

This sequence belongs to the SWEET sugar transporter family. Forms homooligomers and/or heterooligomers.

It is found in the cell membrane. Mediates both low-affinity uptake and efflux of sugar across the plasma membrane. This Oryza sativa subsp. japonica (Rice) protein is Bidirectional sugar transporter SWEET16 (SWEET16).